Here is a 107-residue protein sequence, read N- to C-terminus: MTTEIKKLDPDTAIDIAYDIFLEMAGENLDPADILLFNLQFEERGGVEFVETADDWEEEIGVLIDPEEYAEVWVGLVNEQDEMDDVFAKFLISHREEDREFHVIWKK.

The protein belongs to the putative dsDNA mimic protein family. Monomer in solution. Interacts with the DNA-binding protein HU.

Its function is as follows. May act as a double-stranded DNA (dsDNA) mimic. Probably regulates the activity of the DNA-binding protein HU. The protein is Putative double-stranded DNA mimic protein HI_1450 of Haemophilus influenzae (strain ATCC 51907 / DSM 11121 / KW20 / Rd).